The sequence spans 285 residues: Secreted RxLR effector protein 106 (285 aa).

Residues 1–24 form the signal peptide; sequence MSVRYAGLLLAAVAVSAHINEVNS. The RxLR-dEER motif lies at 42–54; sequence RDLRSADNGNEER. N-linked (GlcNAc...) asparagine glycosylation is found at N182 and N187. The segment covering 220-229 has biased composition (basic and acidic residues); it reads IEGDKEKKGG. Positions 220 to 262 are disordered; it reads IEGDKEKKGGPDYVEGTESRGKKRGQTEAPDLEPGLTPKQKRL. The short motif at 239 to 264 is the Bipartite nuclear localization signal element; sequence RGKKRGQTEAPDLEPGLTPKQKRLKR.

This sequence belongs to the RxLR effector family. Interacts with host RCD1 and SRO1 transcription co-regulators.

It is found in the secreted. The protein resides in the host nucleus. Its function is as follows. Secreted effector that suppresses pathogen-associated molecular pattern (PAMP)-triggered immunity (PTI) in host plants. Binds to RCD1 and SRO1 transcription co-regulators to attenuate transcriptional activation of salicylic acid (SA)-induced defense genes and alters plant growth responses to light. Suppresses SA signal transduction but not SA levels. In Hyaloperonospora arabidopsidis (strain Emoy2) (Downy mildew agent), this protein is Secreted RxLR effector protein 106.